A 509-amino-acid chain; its full sequence is 2-isopropylmalate synthase (509 aa).

The Pyruvate carboxyltransferase domain maps to 5-267 (IQIFDTTLRD…QTALNLEETK (263 aa)). Residues aspartate 14, histidine 202, histidine 204, and asparagine 238 each coordinate Mn(2+). Positions 391-509 (KLETLQLQYV…AAENVEKVGN (119 aa)) are regulatory domain.

The protein belongs to the alpha-IPM synthase/homocitrate synthase family. LeuA type 1 subfamily. In terms of assembly, homodimer. The cofactor is Mn(2+).

It is found in the cytoplasm. It catalyses the reaction 3-methyl-2-oxobutanoate + acetyl-CoA + H2O = (2S)-2-isopropylmalate + CoA + H(+). Its pathway is amino-acid biosynthesis; L-leucine biosynthesis; L-leucine from 3-methyl-2-oxobutanoate: step 1/4. In terms of biological role, catalyzes the condensation of the acetyl group of acetyl-CoA with 3-methyl-2-oxobutanoate (2-ketoisovalerate) to form 3-carboxy-3-hydroxy-4-methylpentanoate (2-isopropylmalate). The sequence is that of 2-isopropylmalate synthase from Staphylococcus aureus (strain MRSA252).